Reading from the N-terminus, the 113-residue chain is Small ribosomal subunit protein uS17 (113 aa).

It belongs to the universal ribosomal protein uS17 family. Part of the 30S ribosomal subunit.

One of the primary rRNA binding proteins, it binds specifically to the 5'-end of 16S ribosomal RNA. The chain is Small ribosomal subunit protein uS17 from Pyrococcus abyssi (strain GE5 / Orsay).